The following is a 327-amino-acid chain: Putative hydroxymethylpyrimidine/phosphomethylpyrimidine kinase C18B5.05c (327 aa).

Gln-54 contacts 4-amino-5-hydroxymethyl-2-methylpyrimidine.

The protein belongs to the ThiD family.

It is found in the cytoplasm. Its subcellular location is the nucleus. The enzyme catalyses 4-amino-5-hydroxymethyl-2-methylpyrimidine + ATP = 4-amino-2-methyl-5-(phosphooxymethyl)pyrimidine + ADP + H(+). It carries out the reaction 4-amino-2-methyl-5-(phosphooxymethyl)pyrimidine + ATP = 4-amino-2-methyl-5-(diphosphooxymethyl)pyrimidine + ADP. It participates in cofactor biosynthesis; thiamine diphosphate biosynthesis; 4-amino-2-methyl-5-diphosphomethylpyrimidine from 5-amino-1-(5-phospho-D-ribosyl)imidazole: step 2/3. Its pathway is cofactor biosynthesis; thiamine diphosphate biosynthesis; 4-amino-2-methyl-5-diphosphomethylpyrimidine from 5-amino-1-(5-phospho-D-ribosyl)imidazole: step 3/3. Its function is as follows. Catalyzes the phosphorylation of hydroxymethylpyrimidine phosphate (HMP-P) to HMP-PP, and of HMP to HMP-P. This is Putative hydroxymethylpyrimidine/phosphomethylpyrimidine kinase C18B5.05c from Schizosaccharomyces pombe (strain 972 / ATCC 24843) (Fission yeast).